The following is a 428-amino-acid chain: MASIEQVGAREILDSRGNPTVEVEVLLEDGSFARAAVPSGASTGEHEAVELRDGGARYGGKGVEKAVEAVLGEIAPAIIGIDATEQRTVDQALLDADGTPDKSRLGANALLGASLAVARAAAESSGLELFRYVGGPNAHVLPVPMMNILNGGAHADTGVDVQEFMVAPIGAPSFKESLRWGAEVYHSLKSVLKEKGLSTGLGDEGGFAPDVAGTKEALDLITIAVNKTGLKLGTDVALALDVAATEFYTDGTGYKFEGKNRTAAEMAAFYAELIDAYPLVSIEDPLDEDDWDGWVALTDQIGNKVQLVGDDLFVTNPERLEEGIVKGAANALLVKVNQIGTLTETLDAVDLAHRNGYKTMMSHRSGETEDTTIADLAVAVGSGQIKTGAPARSERVAKYNQLLRIEENLGDAARYAGEVAFPRFAFEA.

Residue Gln162 coordinates (2R)-2-phosphoglycerate. Glu204 functions as the Proton donor in the catalytic mechanism. Mg(2+)-binding residues include Asp241, Glu283, and Asp310. (2R)-2-phosphoglycerate contacts are provided by Lys335, Arg364, Ser365, and Lys386. Lys335 serves as the catalytic Proton acceptor.

Belongs to the enolase family. It depends on Mg(2+) as a cofactor.

Its subcellular location is the cytoplasm. The protein resides in the secreted. It is found in the cell surface. The enzyme catalyses (2R)-2-phosphoglycerate = phosphoenolpyruvate + H2O. The protein operates within carbohydrate degradation; glycolysis; pyruvate from D-glyceraldehyde 3-phosphate: step 4/5. In terms of biological role, catalyzes the reversible conversion of 2-phosphoglycerate (2-PG) into phosphoenolpyruvate (PEP). It is essential for the degradation of carbohydrates via glycolysis. In Rhodococcus erythropolis (strain PR4 / NBRC 100887), this protein is Enolase.